The chain runs to 348 residues: Probable protein phosphatase 2C 35 (348 aa).

The span at 11-24 (RYPSSSSDGDSRGP) shows a compositional bias: low complexity. A disordered region spans residues 11–40 (RYPSSSSDGDSRGPLEANGVLKGKDQKPLG). A PPM-type phosphatase domain is found at 52 to 342 (VYSVLSQRGY…DDITIIIVQI (291 aa)). Positions 93, 94, 289, and 333 each coordinate Mn(2+).

It belongs to the PP2C family. It depends on Mg(2+) as a cofactor. The cofactor is Mn(2+).

It carries out the reaction O-phospho-L-seryl-[protein] + H2O = L-seryl-[protein] + phosphate. It catalyses the reaction O-phospho-L-threonyl-[protein] + H2O = L-threonyl-[protein] + phosphate. The protein is Probable protein phosphatase 2C 35 of Arabidopsis thaliana (Mouse-ear cress).